Here is a 505-residue protein sequence, read N- to C-terminus: ATP synthase subunit alpha (505 aa).

Residue 169–176 participates in ATP binding; the sequence is GDRQIGKT.

It belongs to the ATPase alpha/beta chains family. In terms of assembly, F-type ATPases have 2 components, CF(1) - the catalytic core - and CF(0) - the membrane proton channel. CF(1) has five subunits: alpha(3), beta(3), gamma(1), delta(1), epsilon(1). CF(0) has three main subunits: a(1), b(2) and c(9-12). The alpha and beta chains form an alternating ring which encloses part of the gamma chain. CF(1) is attached to CF(0) by a central stalk formed by the gamma and epsilon chains, while a peripheral stalk is formed by the delta and b chains.

The protein localises to the cell inner membrane. The catalysed reaction is ATP + H2O + 4 H(+)(in) = ADP + phosphate + 5 H(+)(out). Functionally, produces ATP from ADP in the presence of a proton gradient across the membrane. The alpha chain is a regulatory subunit. The protein is ATP synthase subunit alpha of Desulfosudis oleivorans (strain DSM 6200 / JCM 39069 / Hxd3) (Desulfococcus oleovorans).